Consider the following 336-residue polypeptide: N-acetylornithine carbamoyltransferase (336 aa).

Carbamoyl phosphate is bound by residues 49–52 (SMRT), tryptophan 77, and arginine 112. Glutamate 144 provides a ligand contact to N(2)-acetyl-L-ornithine. 148–151 (HPCQ) is a binding site for carbamoyl phosphate. N(2)-acetyl-L-ornithine contacts are provided by lysine 252 and leucine 295. A carbamoyl phosphate-binding site is contributed by 294–295 (CL). At lysine 302 the chain carries N6-carboxylysine. A carbamoyl phosphate-binding site is contributed by arginine 322.

It belongs to the aspartate/ornithine carbamoyltransferase superfamily. AOTCase family. Homotrimer.

Its subcellular location is the cytoplasm. It carries out the reaction N(2)-acetyl-L-ornithine + carbamoyl phosphate = N(2)-acetyl-L-citrulline + phosphate + H(+). The protein operates within amino-acid biosynthesis; L-arginine biosynthesis. With respect to regulation, carboxylation at Lys-302 increases the catalytic activity of the enzyme. Functionally, catalyzes the transfer of the carbamoyl group from carbamoyl phosphate to the delta-amino group of N(2)-acetyl-L-ornithine to produce N(2)-acetyl-L-citrulline. This is a step in an alternative arginine biosynthesis pathway. The enzyme has no activity with ornithine. The protein is N-acetylornithine carbamoyltransferase of Xylella fastidiosa (strain 9a5c).